The chain runs to 134 residues: Small ribosomal subunit protein uS9 (134 aa).

Residues 114-134 (EVERKKYGLKKARRAPQFSKR) form a disordered region. The segment covering 120-134 (YGLKKARRAPQFSKR) has biased composition (basic residues).

Belongs to the universal ribosomal protein uS9 family.

In Thermotoga neapolitana (strain ATCC 49049 / DSM 4359 / NBRC 107923 / NS-E), this protein is Small ribosomal subunit protein uS9.